The chain runs to 34 residues: COP9 signalosome complex subunit 5a (34 aa).

It belongs to the peptidase M67A family. CSN5 subfamily. Component of the CSN complex, probably composed of CSN1, CSN2, CSN3, CSN4, CSN5 (CSN5A or CSN5B), CSN6 (CSN6A or CSN6B), CSN7 and CSN8. A divalent metal cation is required as a cofactor.

The protein resides in the cytoplasm. It is found in the nucleus. Functionally, probable protease subunit of the COP9 signalosome complex (CSN), a complex involved in various cellular and developmental processes such as photomorphogenesis and auxin and jasmonate responses. The CSN complex is an essential regulator of the ubiquitin (Ubl) conjugation pathway by mediating the deneddylation of the cullin subunits of the SCF-type E3 ligase complexes, leading to decrease the Ubl ligase activity of SCF. In the complex, it probably acts as the catalytic center that mediates the cleavage of Nedd8 from cullins. It however has no metalloprotease activity by itself and requires the other subunits of the CSN complex. The CSN complex is involved in repression of photomorphogenesis in darkness by regulating the activity of COP1-containing Ubl ligase complexes. This chain is COP9 signalosome complex subunit 5a (CSN5A), found in Brassica oleracea (Wild cabbage).